Consider the following 864-residue polypeptide: DNA mismatch repair protein MutS (864 aa).

Gly607–Ser614 serves as a coordination point for ATP.

This sequence belongs to the DNA mismatch repair MutS family.

In terms of biological role, this protein is involved in the repair of mismatches in DNA. It is possible that it carries out the mismatch recognition step. This protein has a weak ATPase activity. The polypeptide is DNA mismatch repair protein MutS (Neisseria meningitidis serogroup C (strain 053442)).